Consider the following 98-residue polypeptide: Acylphosphatase (98 aa).

One can recognise an Acylphosphatase-like domain in the interval 12–98 (TYYVRVRGVV…ERRFERFQQQ (87 aa)). Catalysis depends on residues R27 and N45.

Belongs to the acylphosphatase family.

The enzyme catalyses an acyl phosphate + H2O = a carboxylate + phosphate + H(+). In Burkholderia vietnamiensis (strain G4 / LMG 22486) (Burkholderia cepacia (strain R1808)), this protein is Acylphosphatase (acyP).